A 73-amino-acid polypeptide reads, in one-letter code: Large ribosomal subunit protein uL24 (73 aa).

Over residues 53 to 65 (NPKGGFIKKEKPM) the composition is skewed to basic and acidic residues. The tract at residues 53-73 (NPKGGFIKKEKPMHISNVKKA) is disordered.

The protein belongs to the universal ribosomal protein uL24 family. As to quaternary structure, part of the 50S ribosomal subunit.

One of two assembly initiator proteins, it binds directly to the 5'-end of the 23S rRNA, where it nucleates assembly of the 50S subunit. In terms of biological role, one of the proteins that surrounds the polypeptide exit tunnel on the outside of the subunit. The polypeptide is Large ribosomal subunit protein uL24 (Helicobacter pylori (strain J99 / ATCC 700824) (Campylobacter pylori J99)).